Here is a 533-residue protein sequence, read N- to C-terminus: MDAAAIISLLNSTSDRVDQFHVEVYRLSLYGAGIRGMEEETSLFNLFNSLNTSTGDLQLSVSFTVHVLKKFGFTGLAELTRYASPDFNMASSYPKADLLLTVTSFLYDLHPVRERSNALTFISSVYLNGYNYRSVTMPQFVKVMFDKGVIMIGDVSALDSLIKQYRPSFFNEYMERSKLTNTNSTFVSDDATQDNTAPAPTIPDDRATGTVAAEKGQPSAQVNQPPTTGGGNCTVSGSTQTSTNSFNSTNTVTAAGKEEKVSDDVTKGIKFLLMTATDPELKGVLERLKPLDGRDEVIEQFKNGVDLYIGKYGKHPVVVGQSAHTKGQQGSLPAEKVTNKIMEIFKPKYIIAIGVCFGMDGKEVNLGDVIVSDRIADLYNIRVEPGCIKARITDADKAGDTLVSLFRNPRNDIVSVIGKSRRFNMVKPSFDKENAKEVKVHCGPMVSTPALVDDAEFKEKLSKARPDALAGEMEGAGIFLAAKDHKVEAIVIKAVGDLADGKKIEYKDWKPFACQAAAEYVLHHLDDDRTIHM.

A death domain region spans residues 1 to 262 (MDAAAIISLL…TAAGKEEKVS (262 aa)). Residues 184-248 (STFVSDDATQ…TQTSTNSFNS (65 aa)) form a disordered region. A compositionally biased stretch (polar residues) spans 218-227 (PSAQVNQPPT). Low complexity predominate over residues 236-248 (SGSTQTSTNSFNS). The purine nucleoside phosphorylase domain stretch occupies residues 263–533 (DDVTKGIKFL…HLDDDRTIHM (271 aa)).

The catalysed reaction is ATP + H2O = D-ribose 5-triphosphate + adenine. The enzyme catalyses dATP + H2O = 2-deoxyribose 5-triphosphate + adenine. Functionally, the C-terminal purine nucleoside phosphorylase (PNP) domain cleaves the N-glycosidic bond of ATP, and to a lesser extent dATP, to release adenine and a sugar triphosphate; has weak activity on ADP and AMP and no activity on dADP, dAMP, adenosine, deoxyadenosine or other (d)NTPs. This chain is Death domain-containing ATP nucleosidase (109585858), found in Amphimedon queenslandica (Sponge).